Here is a 420-residue protein sequence, read N- to C-terminus: Histidine--tRNA ligase (420 aa).

Belongs to the class-II aminoacyl-tRNA synthetase family. As to quaternary structure, homodimer.

It is found in the cytoplasm. It carries out the reaction tRNA(His) + L-histidine + ATP = L-histidyl-tRNA(His) + AMP + diphosphate + H(+). The protein is Histidine--tRNA ligase of Mycobacterium marinum (strain ATCC BAA-535 / M).